Consider the following 50-residue polypeptide: Toxic protein HokC (50 aa).

Residues 1-5 (MKQHK) lie on the Cytoplasmic side of the membrane. A helical; Signal-anchor for type II membrane protein transmembrane segment spans residues 6 to 24 (AMIVALIVICITAVVAALV). The Periplasmic segment spans residues 25-50 (TRKDLCEVHIRTGQTEVAVFTAYESE).

This sequence belongs to the Hok/Gef family. In terms of assembly, homodimer; disulfide-linked.

The protein resides in the cell inner membrane. Functionally, toxic component of a type I toxin-antitoxin (TA) system. When overexpressed kills cells within minutes; causes collapse of the transmembrane potential and arrest of respiration. Its toxic effect is probably neutralized by antisense antitoxin RNA SokC. The protein is Toxic protein HokC of Escherichia coli (strain K12).